The following is a 574-amino-acid chain: Adenine deaminase (574 aa).

The protein belongs to the metallo-dependent hydrolases superfamily. Adenine deaminase family. Mn(2+) serves as cofactor.

The catalysed reaction is adenine + H2O + H(+) = hypoxanthine + NH4(+). The sequence is that of Adenine deaminase from Thermosipho africanus (strain TCF52B).